Consider the following 218-residue polypeptide: MRLILLGAPGAGKGTQAKFIMEAYGVPQISTGDMLRAAVKAGSPLGLKVKDIMTSGGLVSDDIIIDLVKERIAEPDCQKGFLFDGFPRTIPQAEALVAAGVNIDHVLEIFVEDEEIVSRLSGRRVHEASGRVYHVKHNAPKTEGVDDETGEPLVQRDDDKEETVRKRLAVYHEQTEPLVDFYKKLSAESSDSLPVYSRVDGIGSLDDIQARVFEALKK.

An ATP-binding site is contributed by 10 to 15; that stretch reads GAGKGT. The segment at 30 to 59 is NMP; it reads STGDMLRAAVKAGSPLGLKVKDIMTSGGLV. AMP-binding positions include threonine 31, arginine 36, 57 to 59, 85 to 88, and glutamine 92; these read GLV and GFPR. Residues 122–159 are LID; it reads GRRVHEASGRVYHVKHNAPKTEGVDDETGEPLVQRDDD. ATP contacts are provided by residues arginine 123 and 132–133; that span reads VY. AMP contacts are provided by arginine 156 and arginine 167. Glycine 203 lines the ATP pocket.

The protein belongs to the adenylate kinase family. In terms of assembly, monomer.

The protein resides in the cytoplasm. It catalyses the reaction AMP + ATP = 2 ADP. It functions in the pathway purine metabolism; AMP biosynthesis via salvage pathway; AMP from ADP: step 1/1. Catalyzes the reversible transfer of the terminal phosphate group between ATP and AMP. Plays an important role in cellular energy homeostasis and in adenine nucleotide metabolism. The polypeptide is Adenylate kinase (Saccharophagus degradans (strain 2-40 / ATCC 43961 / DSM 17024)).